We begin with the raw amino-acid sequence, 1199 residues long: Metabotropic glutamate receptor 1 (1199 aa).

The signal sequence occupies residues 1 to 20 (MVRLLLIFFPMIFLEMSILP). Over 21–592 (RMPDRKVLLA…IRYLEWSDIE (572 aa)) the chain is Extracellular. An intrachain disulfide couples Cys67 to Cys109. Tyr74 is a binding site for L-glutamate. Residue Asn98 is glycosylated (N-linked (GlcNAc...) asparagine). L-glutamate is bound by residues Ser165 and 186-188 (SAT). Asn223 carries N-linked (GlcNAc...) asparagine glycosylation. Tyr236 is an L-glutamate binding site. A disulfide bridge connects residues Cys289 and Cys291. Asp318 is a binding site for L-glutamate. A disulfide bond links Cys378 and Cys394. Asn397 is a glycosylation site (N-linked (GlcNAc...) asparagine). Lys409 contributes to the L-glutamate binding site. Residues Cys432 and Cys439 are joined by a disulfide bond. The N-linked (GlcNAc...) asparagine glycan is linked to Asn515. Residues 593 to 615 (SIIAIAFSCLGILVTLFVTLIFV) form a helical membrane-spanning segment. Residues 616 to 629 (LYRDTPVVKSSSRE) are Cytoplasmic-facing. Residues 630–650 (LCYIILAGIFLGYVCPFTLIA) form a helical membrane-spanning segment. The Extracellular segment spans residues 651–658 (KPTTTSCY). Cys657 and Cys746 form a disulfide bridge. Residues 659 to 680 (LQRLLVGLSSAMCYSALVTKTN) form a helical membrane-spanning segment. The Cytoplasmic portion of the chain corresponds to 681-703 (RIARILAGSKKKICTRKPRFMSA). Residues 704 to 727 (WAQVIIASILISVQLTLVVTLIIM) form a helical membrane-spanning segment. The Extracellular portion of the chain corresponds to 728 to 750 (EPPMPILSYPSIKEVYLICNTSN). N-linked (GlcNAc...) asparagine glycosylation is present at Asn747. Residues 751-772 (LGVVAPVGYNGLLIMSCTYYAF) traverse the membrane as a helical segment. Topologically, residues 773-785 (KTRNVPANFNEAK) are cytoplasmic. The chain crosses the membrane as a helical span at residues 786–807 (YIAFTMYTTCIIWLAFVPIYFG). Over 808 to 815 (SNYKIITT) the chain is Extracellular. A helical membrane pass occupies residues 816 to 840 (CFAVSLSVTVALGCMFTPKMYIIIA). At 841-1199 (KPERNVRSAF…RDYKQSSSTL (359 aa)) the chain is on the cytoplasmic side. Ser853 carries the phosphoserine modification. A Phosphothreonine modification is found at Thr871. Disordered regions lie at residues 882-906 (GAGN…APKG), 959-1035 (EEDN…QPKS), and 1055-1082 (HAVL…QHLQ). Residues 885–895 (NANSNGKSVSW) are compositionally biased toward polar residues. 2 positions are modified to phosphoserine: Ser894 and Ser969. Residues 1012–1032 (GLPPPLPQQQQQPPPQPPPQQ) are compositionally biased toward pro residues. Ser1097 is subject to Phosphoserine. The interval 1118–1177 (VYEREGNTEEDDLEEEEDLPAASKLTPEDSPALTPPSPFRDSVASGSSVPSSPVSESVLC) is disordered. Residues 1125-1136 (TEEDDLEEEEDL) are compositionally biased toward acidic residues. The residue at position 1147 (Ser1147) is a Phosphoserine. Phosphothreonine is present on Thr1151. A Phosphoserine modification is found at Ser1154. Low complexity predominate over residues 1159-1175 (SVASGSSVPSSPVSESV).

It belongs to the G-protein coupled receptor 3 family. Homodimer; disulfide-linked. The PPXXF motif binds HOMER1, HOMER2 and HOMER3. Interacts with TAMALIN. Interacts with RYR1, RYR2, ITPR1, SHANK1 and SHANK3. Interacts with SHIA1. Expressed in the striatum (at protein level). Expressed in type II unipolar brush cells of the cerebellum (at protein level).

It is found in the cell membrane. Its subcellular location is the postsynaptic cell membrane. It localises to the cell projection. The protein resides in the dendrite. Functionally, G-protein coupled receptor for glutamate. Ligand binding causes a conformation change that triggers signaling via guanine nucleotide-binding proteins (G proteins) and modulates the activity of down-stream effectors. Signaling activates a phosphatidylinositol-calcium second messenger system. May participate in the central action of glutamate in the CNS, such as long-term potentiation in the hippocampus and long-term depression in the cerebellum (By. similarity). May function in the light response in the retina. Induces GRID1 and GRID2 cation-channel activation via GNAQ-PLC-PKC pathway in dopaminergic neurons and cerebellar Purkinje cell, respectively. This chain is Metabotropic glutamate receptor 1 (Grm1), found in Mus musculus (Mouse).